Here is a 1002-residue protein sequence, read N- to C-terminus: Mitogen-activated protein kinase kinase kinase 21 (1002 aa).

The disordered stretch occupies residues 1 to 26; sequence MALPVAEGTADTPLSPARDDSGSTSS. The SH3 domain occupies 24 to 88; sequence TSSGMWAALY…PASYVAPCGP (65 aa). One can recognise a Protein kinase domain in the interval 110–390; that stretch reads LELKELIGAG…QLTAIEEAVL (281 aa). Residues 116–124 and K137 contribute to the ATP site; that span reads IGAGGFGQV. D247 acts as the Proton acceptor in catalysis. Phosphothreonine; by autocatalysis is present on T283. The residue at position 287 (S287) is a Phosphoserine; by autocatalysis and MAP4K1. 2 leucine-zipper regions span residues 409-430 and 444-466; these read IQQM…EEEL and LRRR…LNVL. Disordered stretches follow at residues 508–531, 574–604, 640–689, 721–778, 797–823, and 878–899; these read TVQA…PPGS, GCTW…NSPW, HRKP…VGAP, AQAP…SHSS, LGNA…SGCE, and QSAP…RDLA. Phosphoserine occurs at positions 512, 527, and 531. T576 carries the phosphothreonine modification. Over residues 584–596 the composition is skewed to basic and acidic residues; the sequence is TKERPEGRERVRP. At S598 the chain carries Phosphoserine. The span at 661–677 shows a compositional bias: basic and acidic residues; sequence DSQREDSSEAESREEGS. Composition is skewed to low complexity over residues 740–758 and 766–778; these read QPAS…QPSA and STLL…SHSS.

The protein belongs to the protein kinase superfamily. STE Ser/Thr protein kinase family. MAP kinase kinase kinase subfamily. As to quaternary structure, homodimer. Interacts with TLR4. Mg(2+) is required as a cofactor. In terms of processing, autophosphorylation on serine and threonine residues within the activation loop plays a role in enzyme activation.

The enzyme catalyses L-seryl-[protein] + ATP = O-phospho-L-seryl-[protein] + ADP + H(+). The catalysed reaction is L-threonyl-[protein] + ATP = O-phospho-L-threonyl-[protein] + ADP + H(+). With respect to regulation, homodimerization via the leucine zipper domains is required for autophosphorylation and subsequent activation. Its function is as follows. Negative regulator of TLR4 signaling. Does not activate JNK1/MAPK8 pathway, p38/MAPK14, nor ERK2/MAPK1 pathways. This Mus musculus (Mouse) protein is Mitogen-activated protein kinase kinase kinase 21 (Map3k21).